The following is a 462-amino-acid chain: Polygalacturonase (462 aa).

The signal sequence occupies residues 1–22; sequence MALTRLLLPISILWFCFYSSHT. Asparagine 173 carries an N-linked (GlcNAc...) asparagine glycan. Aspartate 278 (proton donor) is an active-site residue. Cysteine 280 and cysteine 297 form a disulfide bridge. A glycan (N-linked (GlcNAc...) asparagine) is linked at asparagine 294. Histidine 301 is a catalytic residue. Asparagine 358 carries N-linked (GlcNAc...) asparagine glycosylation. 2 disulfide bridges follow: cysteine 407-cysteine 413 and cysteine 435-cysteine 460.

Belongs to the glycosyl hydrolase 28 family.

Its subcellular location is the secreted. It is found in the cell wall. The enzyme catalyses (1,4-alpha-D-galacturonosyl)n+m + H2O = (1,4-alpha-D-galacturonosyl)n + (1,4-alpha-D-galacturonosyl)m.. In terms of biological role, acts in concert with the pectinesterase, in the ripening process. Is involved in cell wall metabolism, specifically in polyuronide degradation. This is Polygalacturonase from Persea americana (Avocado).